Consider the following 646-residue polypeptide: Acetyl-coenzyme A synthetase (646 aa).

Residues 190 to 193 and threonine 309 contribute to the CoA site; that span reads RAGN. Residues 385 to 387, 409 to 414, aspartate 498, and arginine 513 each bind ATP; these read GEP and DTWWQT. Serine 521 provides a ligand contact to CoA. An ATP-binding site is contributed by arginine 524. Mg(2+)-binding residues include valine 535, histidine 537, and valine 540. CoA is bound at residue arginine 582. Residue lysine 607 is modified to N6-acetyllysine.

It belongs to the ATP-dependent AMP-binding enzyme family. The cofactor is Mg(2+). In terms of processing, acetylated. Deacetylation by the SIR2-homolog deacetylase activates the enzyme.

The enzyme catalyses acetate + ATP + CoA = acetyl-CoA + AMP + diphosphate. In terms of biological role, catalyzes the conversion of acetate into acetyl-CoA (AcCoA), an essential intermediate at the junction of anabolic and catabolic pathways. AcsA undergoes a two-step reaction. In the first half reaction, AcsA combines acetate with ATP to form acetyl-adenylate (AcAMP) intermediate. In the second half reaction, it can then transfer the acetyl group from AcAMP to the sulfhydryl group of CoA, forming the product AcCoA. The chain is Acetyl-coenzyme A synthetase from Pseudoalteromonas translucida (strain TAC 125).